A 268-amino-acid polypeptide reads, in one-letter code: 4-hydroxy-tetrahydrodipicolinate reductase (268 aa).

Residues Gly-7–Met-12 and Glu-33 each bind NAD(+). Arg-34 provides a ligand contact to NADP(+). NAD(+)-binding positions include Gly-97–Thr-99 and Ser-121–Met-124. His-155 acts as the Proton donor/acceptor in catalysis. Residue His-156 coordinates (S)-2,3,4,5-tetrahydrodipicolinate. The Proton donor role is filled by Lys-159. (S)-2,3,4,5-tetrahydrodipicolinate is bound at residue Gly-165–Thr-166.

It belongs to the DapB family.

Its subcellular location is the cytoplasm. It carries out the reaction (S)-2,3,4,5-tetrahydrodipicolinate + NAD(+) + H2O = (2S,4S)-4-hydroxy-2,3,4,5-tetrahydrodipicolinate + NADH + H(+). It catalyses the reaction (S)-2,3,4,5-tetrahydrodipicolinate + NADP(+) + H2O = (2S,4S)-4-hydroxy-2,3,4,5-tetrahydrodipicolinate + NADPH + H(+). It participates in amino-acid biosynthesis; L-lysine biosynthesis via DAP pathway; (S)-tetrahydrodipicolinate from L-aspartate: step 4/4. Functionally, catalyzes the conversion of 4-hydroxy-tetrahydrodipicolinate (HTPA) to tetrahydrodipicolinate. The polypeptide is 4-hydroxy-tetrahydrodipicolinate reductase (Brucella abortus (strain 2308)).